A 236-amino-acid chain; its full sequence is tRNA (guanine-N(7)-)-methyltransferase (236 aa).

Residues 1-23 (MEADVQRAQQAQLEKGSSVPPWT) form a disordered region. S-adenosyl-L-methionine is bound by residues D69, E94, N121, and D144. The active site involves D144. K148 and D180 together coordinate substrate.

The protein belongs to the class I-like SAM-binding methyltransferase superfamily. TrmB family.

The catalysed reaction is guanosine(46) in tRNA + S-adenosyl-L-methionine = N(7)-methylguanosine(46) in tRNA + S-adenosyl-L-homocysteine. The protein operates within tRNA modification; N(7)-methylguanine-tRNA biosynthesis. Its function is as follows. Catalyzes the formation of N(7)-methylguanine at position 46 (m7G46) in tRNA. This is tRNA (guanine-N(7)-)-methyltransferase from Synechococcus sp. (strain JA-3-3Ab) (Cyanobacteria bacterium Yellowstone A-Prime).